The primary structure comprises 823 residues: MGGRVFLVFLAFCVWLTLPGAETQDSRGCARWCPQDSSCVNATACRCNPGFSSFSEIITTPMETCDDINECATLSKVSCGKFSDCWNTEGSYDCVCSPGYEPVSGAKTFKNESENTCQDVDECQQNPRLCKSYGTCVNTLGSYTCQCLPGFKLKPEDPKLCTDVNECTSGQNPCHSSTHCLNNVGSYQCRCRPGWQPIPGSPNGPNNTVCEDVDECSSGQHQCDSSTVCFNTVGSYSCRCRPGWKPRHGIPNNQKDTVCEDMTFSTWTPPPGVHSQTLSRFFDKVQDLGRDYKPGLANNTIQSILQALDELLEAPGDLETLPRLQQHCVASHLLDGLEDVLRGLSKNLSNGLLNFSYPAGTELSLEVQKQVDRSVTLRQNQAVMQLDWNQAQKSGDPGPSVVGLVSIPGMGKLLAEAPLVLEPEKQMLLHETHQGLLQDGSPILLSDVISAFLSNNDTQNLSSPVTFTFSHRSVIPRQKVLCVFWEHGQNGCGHWATTGCSTIGTRDTSTICRCTHLSSFAVLMAHYDVQEEDPVLTVITYMGLSVSLLCLLLAALTFLLCKAIQNTSTSLHLQLSLCLFLAHLLFLVAIDQTGHKVLCSIIAGTLHYLYLATLTWMLLEALYLFLTARNLTVVNYSSINRFMKKLMFPVGYGVPAVTVAISAASRPHLYGTPSRCWLQPEKGFIWGFLGPVCAIFSVNLVLFLVTLWILKNRLSSLNSEVSTLRNTRMLAFKATAQLFILGCTWCLGILQVGPAARVMAYLFTIINSLQGVFIFLVYCLLSQQVREQYGKWSKGIRKLKTESEMHTLSSSAKADTSKPSTVN.

The signal sequence occupies residues 1–23 (MGGRVFLVFLAFCVWLTLPGAET). Residues 24–540 (QDSRGCARWC…EEDPVLTVIT (517 aa)) lie on the Extracellular side of the membrane. In terms of domain architecture, EGF-like 1 spans 25–66 (DSRGCARWCPQDSSCVNATACRCNPGFSSFSEIITTPMETCD). Intrachain disulfides connect Cys29/Cys39, Cys33/Cys45, Cys47/Cys65, Cys71/Cys85, Cys79/Cys94, Cys96/Cys117, Cys123/Cys136, Cys130/Cys145, Cys147/Cys161, Cys167/Cys180, Cys174/Cys189, Cys191/Cys210, Cys216/Cys229, Cys223/Cys238, and Cys240/Cys259. The N-linked (GlcNAc...) asparagine glycan is linked to Asn41. Residues 67 to 118 (DINECATLSKVSCGKFSDCWNTEGSYDCVCSPGYEPVSGAKTFKNESENTCQ) form the EGF-like 2; calcium-binding domain. A glycan (N-linked (GlcNAc...) asparagine) is linked at Asn111. An EGF-like 3; calcium-binding domain is found at 119 to 162 (DVDECQQNPRLCKSYGTCVNTLGSYTCQCLPGFKLKPEDPKLCT). The EGF-like 4; calcium-binding domain maps to 163–211 (DVNECTSGQNPCHSSTHCLNNVGSYQCRCRPGWQPIPGSPNGPNNTVCE). N-linked (GlcNAc...) asparagine glycosylation occurs at Asn206. Residues 212–260 (DVDECSSGQHQCDSSTVCFNTVGSYSCRCRPGWKPRHGIPNNQKDTVCE) enclose the EGF-like 5; calcium-binding domain. Residues Asn298, Asn347, Asn354, Asn456, and Asn460 are each glycosylated (N-linked (GlcNAc...) asparagine). The GAIN-B domain occupies 354–530 (NFSYPAGTEL…AVLMAHYDVQ (177 aa)). 2 disulfide bridges follow: Cys482/Cys512 and Cys500/Cys514. The segment at 482–530 (CVFWEHGQNGCGHWATTGCSTIGTRDTSTICRCTHLSSFAVLMAHYDVQ) is GPS. A helical membrane pass occupies residues 541–561 (YMGLSVSLLCLLLAALTFLLC). Over 562–569 (KAIQNTST) the chain is Cytoplasmic. The chain crosses the membrane as a helical span at residues 570–590 (SLHLQLSLCLFLAHLLFLVAI). Over 591–605 (DQTGHKVLCSIIAGT) the chain is Extracellular. A helical transmembrane segment spans residues 606–626 (LHYLYLATLTWMLLEALYLFL). Residues 627-644 (TARNLTVVNYSSINRFMK) lie on the Cytoplasmic side of the membrane. A helical membrane pass occupies residues 645–665 (KLMFPVGYGVPAVTVAISAAS). Residues 666-683 (RPHLYGTPSRCWLQPEKG) are Extracellular-facing. Residues 684 to 704 (FIWGFLGPVCAIFSVNLVLFL) traverse the membrane as a helical segment. The Cytoplasmic portion of the chain corresponds to 705-735 (VTLWILKNRLSSLNSEVSTLRNTRMLAFKAT). Residues 736–756 (AQLFILGCTWCLGILQVGPAA) traverse the membrane as a helical segment. Residues 757 to 760 (RVMA) lie on the Extracellular side of the membrane. A helical transmembrane segment spans residues 761-781 (YLFTIINSLQGVFIFLVYCLL). The Cytoplasmic segment spans residues 782–823 (SQQVREQYGKWSKGIRKLKTESEMHTLSSSAKADTSKPSTVN).

Belongs to the G-protein coupled receptor 2 family. Adhesion G-protein coupled receptor (ADGR) subfamily. In terms of assembly, forms a heterodimer, consisting of a large extracellular region non-covalently linked to a seven-transmembrane moiety. Interacts with chondroitin sulfate; the interaction with chondroitin sulfate is calcium-dependent. Interacts with CD55. In terms of processing, autoproteolytically cleaved into 2 subunits, an extracellular alpha subunit and a seven-transmembrane beta subunit. As to expression, expression is restricted to myeloid cells. Highest expression was found in peripheral blood leukocytes, followed by spleen and lymph nodes, with intermediate to low levels in thymus, bone marrow, fetal liver, placenta, and lung, and no expression in heart, brain, skeletal muscle, kidney, or pancreas. Expression is also detected in monocyte/macrophage and Jurkat cell lines but not in other cell lines tested. High expression in mast cells.

The protein localises to the cell membrane. It is found in the cell projection. The protein resides in the ruffle membrane. Cell surface receptor that binds to the chondroitin sulfate moiety of glycosaminoglycan chains and promotes cell attachment. Promotes granulocyte chemotaxis, degranulation and adhesion. In macrophages, promotes the release of inflammatory cytokines, including IL8 and TNF. Signals probably through G-proteins. Is a regulator of mast cell degranulation. The sequence is that of Adhesion G protein-coupled receptor E2 from Homo sapiens (Human).